A 142-amino-acid polypeptide reads, in one-letter code: Transcriptional regulator MraZ (142 aa).

2 SpoVT-AbrB domains span residues 5–46 (THPV…DRSE) and 75–118 (AAAQ…DSEA).

It belongs to the MraZ family. As to quaternary structure, forms oligomers.

Its subcellular location is the cytoplasm. The protein localises to the nucleoid. The chain is Transcriptional regulator MraZ from Tropheryma whipplei (strain TW08/27) (Whipple's bacillus).